A 104-amino-acid polypeptide reads, in one-letter code: Large ribosomal subunit protein uL23 (104 aa).

This sequence belongs to the universal ribosomal protein uL23 family. In terms of assembly, part of the 50S ribosomal subunit. Contacts protein L29, and trigger factor when it is bound to the ribosome.

Functionally, one of the early assembly proteins it binds 23S rRNA. One of the proteins that surrounds the polypeptide exit tunnel on the outside of the ribosome. Forms the main docking site for trigger factor binding to the ribosome. This Rhodospirillum rubrum (strain ATCC 11170 / ATH 1.1.1 / DSM 467 / LMG 4362 / NCIMB 8255 / S1) protein is Large ribosomal subunit protein uL23.